The following is an 83-amino-acid chain: RNA-binding protein Hfq (83 aa).

A Sm domain is found at 9 to 68; it reads DPYLNALRKERIPVSIFLVNGIKLQGQIESFDQFVILLKNTVSQMVYKHAISTVVPARNV.

It belongs to the Hfq family. In terms of assembly, homohexamer.

In terms of biological role, RNA chaperone that binds small regulatory RNA (sRNAs) and mRNAs to facilitate mRNA translational regulation in response to envelope stress, environmental stress and changes in metabolite concentrations. Also binds with high specificity to tRNAs. This chain is RNA-binding protein Hfq, found in Marinobacter nauticus (strain ATCC 700491 / DSM 11845 / VT8) (Marinobacter aquaeolei).